Reading from the N-terminus, the 69-residue chain is DNA-directed RNA polymerase subunit omega (69 aa).

The protein belongs to the RNA polymerase subunit omega family. As to quaternary structure, the RNAP catalytic core consists of 2 alpha, 1 beta, 1 beta' and 1 omega subunit. When a sigma factor is associated with the core the holoenzyme is formed, which can initiate transcription.

The catalysed reaction is RNA(n) + a ribonucleoside 5'-triphosphate = RNA(n+1) + diphosphate. Promotes RNA polymerase assembly. Latches the N- and C-terminal regions of the beta' subunit thereby facilitating its interaction with the beta and alpha subunits. The polypeptide is DNA-directed RNA polymerase subunit omega (Exiguobacterium sp. (strain ATCC BAA-1283 / AT1b)).